The following is a 108-amino-acid chain: Cell wall protein PGA48 (108 aa).

An N-terminal signal peptide occupies residues 1–17 (MFKFVIYLFTFIAFANA). N-linked (GlcNAc...) asparagine glycans are attached at residues asparagine 18, asparagine 41, and asparagine 77. A lipid anchor (GPI-anchor amidated asparagine) is attached at asparagine 84. A propeptide spans 85-108 (GASKLNLRSLAGAGLVAAIFIAFI) (removed in mature form).

Belongs to the SED1 family. Post-translationally, the GPI-anchor is attached to the protein in the endoplasmic reticulum and serves to target the protein to the cell surface. There, the glucosamine-inositol phospholipid moiety is cleaved off and the GPI-modified mannoprotein is covalently attached via its lipidless GPI glycan remnant to the 1,6-beta-glucan of the outer cell wall layer.

Its subcellular location is the secreted. The protein localises to the cell wall. It is found in the membrane. Its function is as follows. Cell wall protein that plays a role in adaptation and resistance to cell wall stress. The polypeptide is Cell wall protein PGA48 (PGA48) (Candida albicans (strain SC5314 / ATCC MYA-2876) (Yeast)).